A 684-amino-acid chain; its full sequence is MTSTAPSDGTGIIDLDPWLEPFREAIKRRFDYVESWIKTVDEVEGGLDKFSKGYEKFGFNVSETGDITYREWAPNAIEAALVGDFNNWDTKANPMTRDNFGVWEIALPAKNGTPVIPHDSKVKITMVTRSGERIYRIPAWIKRVVQDLNVSPIYESVFWNPPKAERYNFQHARPKKPESLRIYEAHVGISSPDTRVATYKEFTANMLPRIKYLGYNAIQLMAIMEHAYYASFGYQVNNFFAASSRYGKPEDLKELVDTAHSMGLVVLLDVVHSHASKNVDDGLNMFDGSDHLYFHSGSKGQHELWDSRLFNYGNHEVLRFLLSNLRFWMEEYGFDGFRFDGVTSMLYTHHGIGTGFSGGYHEYFGPAVDDDGVMYLALANEMLHRLYPDCITVAEDVSGMPALCLPHGLGGVGFDYRLAMAIPDMYIKLLKEKSDNDWDIGNLAFTLTNRRHGEKTIAYAESHDQALVGDKSLMMWLCDKEMYTHMSVLTEFTPVIERGMALHKMIRLVTHALGGEGYLNFEGNEFGHPEWLDFPRAGNNNSFWYARRQLNLTEDHLLRYRFLNEFDRAMQLTESKYGWLHAPQAYISLKHEGDKVLVFERADLLWIFNFHPTESFTDYRVGVEQAGTYRVVLDTDDQAFGGLGRIDQGTRFFTTDMEWNGRRNYLQVYIPTRTALALALEETL.

The (1,4-alpha-D-glucosyl)n site is built by tryptophan 88 and lysine 123. Catalysis depends on aspartate 340, which acts as the Nucleophile. Glutamate 395 serves as the catalytic Proton donor.

It belongs to the glycosyl hydrolase 13 family. GlgB subfamily.

The protein localises to the cytoplasm. The enzyme catalyses Transfers a segment of a (1-&gt;4)-alpha-D-glucan chain to a primary hydroxy group in a similar glucan chain.. Its pathway is glycan biosynthesis; glycogen biosynthesis. Glycogen-branching enzyme participates in the glycogen biosynthetic process along with glycogenin and glycogen synthase. Generates alpha-1,6-glucosidic branches from alpha-1,4-linked glucose chains, to increase solubility of the glycogen polymer. This is 1,4-alpha-glucan-branching enzyme (be1) from Emericella nidulans (strain FGSC A4 / ATCC 38163 / CBS 112.46 / NRRL 194 / M139) (Aspergillus nidulans).